The primary structure comprises 231 residues: Aldehyde decarbonylase (231 aa).

Fe cation-binding residues include E32, E60, H63, E115, and H147.

Belongs to the aldehyde decarbonylase family. Binds 2 metal cations per subunit. The catalytic dinuclear metal-binding site could be either a di-iron or a manganese-iron cofactor. is required as a cofactor.

It carries out the reaction a long-chain fatty aldehyde + 2 NADPH + O2 + H(+) = a long-chain alkane + formate + 2 NADP(+) + H2O. Its function is as follows. Catalyzes the decarbonylation of fatty aldehydes to alkanes. Requires the presence of ferredoxin, ferredoxin reductase and NADPH for in vitro decarbonylase activity. Involved in the biosynthesis of alkanes, mainly heptadecane and pentadecane. The protein is Aldehyde decarbonylase of Synechocystis sp. (strain ATCC 27184 / PCC 6803 / Kazusa).